Reading from the N-terminus, the 407-residue chain is Phosphopentomutase (407 aa).

Positions 10, 306, 311, 347, 348, and 359 each coordinate Mn(2+).

Belongs to the phosphopentomutase family. The cofactor is Mn(2+).

The protein resides in the cytoplasm. It catalyses the reaction 2-deoxy-alpha-D-ribose 1-phosphate = 2-deoxy-D-ribose 5-phosphate. It carries out the reaction alpha-D-ribose 1-phosphate = D-ribose 5-phosphate. The protein operates within carbohydrate degradation; 2-deoxy-D-ribose 1-phosphate degradation; D-glyceraldehyde 3-phosphate and acetaldehyde from 2-deoxy-alpha-D-ribose 1-phosphate: step 1/2. Its function is as follows. Isomerase that catalyzes the conversion of deoxy-ribose 1-phosphate (dRib-1-P) and ribose 1-phosphate (Rib-1-P) to deoxy-ribose 5-phosphate (dRib-5-P) and ribose 5-phosphate (Rib-5-P), respectively. The sequence is that of Phosphopentomutase from Sodalis glossinidius (strain morsitans).